Reading from the N-terminus, the 209-residue chain is Kynurenine formamidase (209 aa).

Tryptophan 18 provides a ligand contact to substrate. Residues histidine 48, histidine 52, and aspartate 54 each contribute to the Zn(2+) site. Histidine 58 acts as the Proton donor/acceptor in catalysis. Zn(2+) contacts are provided by histidine 160 and glutamate 172.

This sequence belongs to the Cyclase 1 superfamily. KynB family. Homodimer. It depends on Zn(2+) as a cofactor.

The enzyme catalyses N-formyl-L-kynurenine + H2O = L-kynurenine + formate + H(+). The protein operates within amino-acid degradation; L-tryptophan degradation via kynurenine pathway; L-kynurenine from L-tryptophan: step 2/2. Functionally, catalyzes the hydrolysis of N-formyl-L-kynurenine to L-kynurenine, the second step in the kynurenine pathway of tryptophan degradation. The protein is Kynurenine formamidase of Sphingopyxis alaskensis (strain DSM 13593 / LMG 18877 / RB2256) (Sphingomonas alaskensis).